The chain runs to 407 residues: Proteasome-activating nucleotidase (407 aa).

The stretch at 22-67 forms a coiled coil; that stretch reads KEKTQIAELESKVLRLELKNKDINRENVQIKKENEILKRELDKLRI. Residues 192 to 197 and histidine 331 each bind ATP; that span reads GTGKTL. Residues 405–407 form a docks into pockets in the proteasome alpha-ring to cause gate opening region; the sequence is MYG.

This sequence belongs to the AAA ATPase family. Homohexamer. The hexameric complex has a two-ring architecture resembling a top hat that caps the 20S proteasome core at one or both ends. Upon ATP-binding, the C-terminus of PAN interacts with the alpha-rings of the proteasome core by binding to the intersubunit pockets.

It localises to the cytoplasm. Functionally, ATPase which is responsible for recognizing, binding, unfolding and translocation of substrate proteins into the archaeal 20S proteasome core particle. Is essential for opening the gate of the 20S proteasome via an interaction with its C-terminus, thereby allowing substrate entry and access to the site of proteolysis. Thus, the C-termini of the proteasomal ATPase function like a 'key in a lock' to induce gate opening and therefore regulate proteolysis. Unfolding activity requires energy from ATP hydrolysis, whereas ATP binding alone promotes ATPase-20S proteasome association which triggers gate opening, and supports translocation of unfolded substrates. This is Proteasome-activating nucleotidase from Methanococcus maripaludis (strain DSM 14266 / JCM 13030 / NBRC 101832 / S2 / LL).